We begin with the raw amino-acid sequence, 269 residues long: Integral membrane protein 2C (269 aa).

A Phosphothreonine modification is found at Thr39. A helical; Signal-anchor for type II membrane protein membrane pass occupies residues 57–77 (VGGVCYLSMGMVVLLMGLVFA). The 95-residue stretch at 138–232 (FGGGDPADII…LCNGKDTYRL (95 aa)) folds into the BRICHOS domain. Residues Cys165 and Cys224 are joined by a disulfide bond. Asn171 carries an N-linked (GlcNAc...) asparagine glycan.

It belongs to the ITM2 family. In terms of assembly, interacts with BACE1. Interacts with APP. Interacts with STMN2. In terms of processing, type I membrane-bound, as well as soluble, furin has a pre-eminent role in ITM2C proteolytic processing. PCSK7 and PCSK5 may also be involved although to a lesser extent. The soluble form of PCSK7 is incapable of processing ITM2C. Fails to undergo shedding by ADAM10 and intramembrane cleavage by SPPL2B.

It localises to the lysosome membrane. Its subcellular location is the cell membrane. Functionally, negative regulator of amyloid-beta peptide production. May inhibit the processing of APP by blocking its access to alpha- and beta-secretase. Binding to the beta-secretase-cleaved APP C-terminal fragment is negligible, suggesting that ITM2C is a poor gamma-secretase cleavage inhibitor. May play a role in TNF-induced cell death and neuronal differentiation. In Mus musculus (Mouse), this protein is Integral membrane protein 2C (Itm2c).